Here is a 338-residue protein sequence, read N- to C-terminus: Cinnamoyl-CoA reductase 1 (338 aa).

NADP(+) contacts are provided by residues 22–28, Arg-47, Lys-53, 73–74, 93–95, Tyr-165, Lys-169, 192–195, and Ser-207; these read GAGGFIG, DV, VAS, and PSMT. Cysteines 158 and 166 form a disulfide. The Proton donor role is filled by Lys-169.

The protein belongs to the NAD(P)-dependent epimerase/dehydratase family. Dihydroflavonol-4-reductase subfamily. As to quaternary structure, interacts with RAC1 in a GTP-dependent manner.

The protein localises to the cytoplasm. It catalyses the reaction (E)-cinnamaldehyde + NADP(+) + CoA = (E)-cinnamoyl-CoA + NADPH + H(+). The protein operates within aromatic compound metabolism; phenylpropanoid biosynthesis. Its activity is regulated as follows. Activated by the small GTPase RAC1. In terms of biological role, involved in the latter stages of lignin biosynthesis. Catalyzes one of the last steps of monolignol biosynthesis, the conversion of cinnamoyl-CoAs into their corresponding cinnamaldehydes. Probably involved in the formation of lignin in defense responses. The sequence is that of Cinnamoyl-CoA reductase 1 from Oryza sativa subsp. japonica (Rice).